Consider the following 326-residue polypeptide: Phospho-N-acetylmuramoyl-pentapeptide-transferase (326 aa).

A run of 10 helical transmembrane segments spans residues 2–22 (ILAT…FPYF), 51–71 (VPPM…LLWA), 73–93 (LTPE…LGFI), 113–133 (ILIQ…YSAE), 143–163 (GVII…IVGS), 175–195 (GLAA…AYIT), 199–219 (MNIT…LWFN), 225–245 (IFMG…TSVL), 250–270 (MLFA…IIQI), and 305–325 (VIVM…ITFL).

Belongs to the glycosyltransferase 4 family. MraY subfamily. Mg(2+) serves as cofactor.

It is found in the cell membrane. It carries out the reaction UDP-N-acetyl-alpha-D-muramoyl-L-alanyl-gamma-D-glutamyl-meso-2,6-diaminopimeloyl-D-alanyl-D-alanine + di-trans,octa-cis-undecaprenyl phosphate = di-trans,octa-cis-undecaprenyl diphospho-N-acetyl-alpha-D-muramoyl-L-alanyl-D-glutamyl-meso-2,6-diaminopimeloyl-D-alanyl-D-alanine + UMP. The protein operates within cell wall biogenesis; peptidoglycan biosynthesis. In terms of biological role, catalyzes the initial step of the lipid cycle reactions in the biosynthesis of the cell wall peptidoglycan: transfers peptidoglycan precursor phospho-MurNAc-pentapeptide from UDP-MurNAc-pentapeptide onto the lipid carrier undecaprenyl phosphate, yielding undecaprenyl-pyrophosphoryl-MurNAc-pentapeptide, known as lipid I. This chain is Phospho-N-acetylmuramoyl-pentapeptide-transferase, found in Wolbachia pipientis wMel.